The following is a 457-amino-acid chain: Phosphomethylpyrimidine synthase (457 aa).

Substrate is bound by residues N80, M109, Y139, H175, 195–197 (SRG), 236–239 (DSLR), and E275. Residue H279 coordinates Zn(2+). A substrate-binding site is contributed by Y302. H343 contributes to the Zn(2+) binding site. Positions 423, 426, and 431 each coordinate [4Fe-4S] cluster.

The protein belongs to the ThiC family. [4Fe-4S] cluster serves as cofactor.

It carries out the reaction 5-amino-1-(5-phospho-beta-D-ribosyl)imidazole + S-adenosyl-L-methionine = 4-amino-2-methyl-5-(phosphooxymethyl)pyrimidine + CO + 5'-deoxyadenosine + formate + L-methionine + 3 H(+). The protein operates within cofactor biosynthesis; thiamine diphosphate biosynthesis. In terms of biological role, catalyzes the synthesis of the hydroxymethylpyrimidine phosphate (HMP-P) moiety of thiamine from aminoimidazole ribotide (AIR) in a radical S-adenosyl-L-methionine (SAM)-dependent reaction. The protein is Phosphomethylpyrimidine synthase of Nostoc sp. (strain PCC 7120 / SAG 25.82 / UTEX 2576).